A 125-amino-acid polypeptide reads, in one-letter code: Casein kinase I isoform alpha (125 aa).

A Protein kinase domain is found at 1–125 (GEEVAVKLES…LIDFGLAKKY (125 aa)). K7 lines the ATP pocket. D97 acts as the Proton acceptor in catalysis.

This sequence belongs to the protein kinase superfamily. CK1 Ser/Thr protein kinase family. Casein kinase I subfamily. Interacts with the Axin complex. Interacts with TUT1, leading to TUT1 phosphorylation. Interacts with FAM83A, FAM83B, FAM83C, FAM83D, FAM83E, FAM83F, FAM83G and FAM83H (via DUF1669). Interaction with FAM83H recruits CSNK1A1 to keratin filaments. Post-translationally, phosphorylated by MTOR in response to mitogenic stimulation, leading to its activation.

It localises to the cytoplasm. The protein resides in the cytoskeleton. Its subcellular location is the microtubule organizing center. The protein localises to the centrosome. It is found in the chromosome. It localises to the centromere. The protein resides in the kinetochore. Its subcellular location is the nucleus speckle. The protein localises to the cilium basal body. It is found in the spindle. The enzyme catalyses L-seryl-[protein] + ATP = O-phospho-L-seryl-[protein] + ADP + H(+). It carries out the reaction L-threonyl-[protein] + ATP = O-phospho-L-threonyl-[protein] + ADP + H(+). In terms of biological role, casein kinases are operationally defined by their preferential utilization of acidic proteins such as caseins as substrates. It can phosphorylate a large number of proteins. Participates in Wnt signaling. Phosphorylates CTNNB1 at 'Ser-45'. May phosphorylate PER1 and PER2. May play a role in segregating chromosomes during mitosis. May play a role in keratin cytoskeleton disassembly and thereby, it may regulate epithelial cell migration. Acts as a positive regulator of mTORC1 and mTORC2 signaling in response to nutrients by mediating phosphorylation of DEPTOR inhibitor. Acts as an inhibitor of NLRP3 inflammasome assembly by mediating phosphorylation of NLRP3. This chain is Casein kinase I isoform alpha (CSNK1A1), found in Sus scrofa (Pig).